Reading from the N-terminus, the 297-residue chain is tRNA uridine(34) hydroxylase (297 aa).

Residues 133-228 (SGDEVVFFDG…YGETFKDQGL (96 aa)) enclose the Rhodanese domain. Catalysis depends on Cys-188, which acts as the Cysteine persulfide intermediate.

Belongs to the TrhO family.

It catalyses the reaction uridine(34) in tRNA + AH2 + O2 = 5-hydroxyuridine(34) in tRNA + A + H2O. Catalyzes oxygen-dependent 5-hydroxyuridine (ho5U) modification at position 34 in tRNAs. The polypeptide is tRNA uridine(34) hydroxylase (Pseudarthrobacter chlorophenolicus (strain ATCC 700700 / DSM 12829 / CIP 107037 / JCM 12360 / KCTC 9906 / NCIMB 13794 / A6) (Arthrobacter chlorophenolicus)).